A 225-amino-acid chain; its full sequence is PKHD-type hydroxylase YbiX (225 aa).

Residues 78 to 177 (TLSTPLFNRY…RVASFMWIQS (100 aa)) form the Fe2OG dioxygenase domain. The Fe cation site is built by H96, D98, and H158. R168 is a 2-oxoglutarate binding site.

Fe(2+) is required as a cofactor. L-ascorbate serves as cofactor.

The chain is PKHD-type hydroxylase YbiX from Escherichia coli (strain K12 / DH10B).